The following is a 3189-amino-acid chain: Beauvericin nonribosomal cyclodepsipeptide synthetase (3189 aa).

Positions 73 to 466 are condensation 1; that stretch reads HAMYEISQHV…EQLQSAADDA (394 aa). The tract at residues 202–223 is disordered; sequence DSLPLTPDSSGGSDSDSPSTLK. The span at 208-220 shows a compositional bias: low complexity; that stretch reads PDSSGGSDSDSPS. Positions 507 to 901 are adenylation 1; the sequence is AESPSDPAVL…GRIDSQVKIR (395 aa). Positions 1036–1112 constitute a Carrier 1 domain; sequence TLETGPEARL…RLQAVMSGDS (77 aa). Ser1073 bears the O-(pantetheine 4'-phosphoryl)serine mark. A condensation 2 region spans residues 1136-1569; the sequence is SYSQGRLWFL…KSLISVLPLT (434 aa). The tract at residues 1599 to 2004 is adenylation 2; that stretch reads FRSQVATCPD…GRMDFQFKIR (406 aa). The S-adenosyl-L-methionine-dependent N-methyltransferase stretch occupies residues 2072–2211; the sequence is MYNGIDAISP…FPTVEYLTRV (140 aa). 2 consecutive Carrier domains span residues 2557–2631 and 2654–2728; these read CPIS…REGL and APRN…ELGQ. An O-(pantetheine 4'-phosphoryl)serine mark is found at Ser2591 and Ser2688. The segment at 2773-3181 is condensation 3; sequence QDVYPATHMQ…AYLMEEVCRL (409 aa).

It belongs to the NRP synthetase family.

The catalysed reaction is 3 (R)-2-hydroxy-3-methylbutanoate + 3 L-phenylalanine + 3 S-adenosyl-L-methionine + 6 ATP = beauvericin + 6 AMP + 3 S-adenosyl-L-homocysteine + 6 diphosphate + 6 H(+). In terms of biological role, beauvericin nonribosomal cyclodepsipeptide synthetase; part of the gene cluster that mediates the biosynthesis of beauvericin (BEA), a non-ribosomal cyclic hexadepsipeptide that shows antibiotic, antifungal, insecticidal, and cancer cell antiproliferative and antihaptotactic activity. Ketoisovalerate reductase BEA2 catalyzes the NADPH-specific reduction of ketoisovaleric acid to hydroxyisovalerate, a precursor for beauvericin biosynthesis. The nonribosomal cyclodepsipeptide synthetase BEA1 then catalyzes the formation of beauvericin via condensation and cyclization of 3 dipeptidol monomers, each composed of one unit of hydroxyisovalerate and one unit of N-methyl-phenylalanine. The protein is Beauvericin nonribosomal cyclodepsipeptide synthetase (Beas) of Beauveria bassiana (White muscardine disease fungus).